The following is a 208-amino-acid chain: Small ribosomal subunit protein uS4 (208 aa).

The region spanning 98 to 158 is the S4 RNA-binding domain; the sequence is RRLDNIVYRL…EKSRKVASIN (61 aa).

It belongs to the universal ribosomal protein uS4 family. Part of the 30S ribosomal subunit. Contacts protein S5. The interaction surface between S4 and S5 is involved in control of translational fidelity.

Functionally, one of the primary rRNA binding proteins, it binds directly to 16S rRNA where it nucleates assembly of the body of the 30S subunit. Its function is as follows. With S5 and S12 plays an important role in translational accuracy. In Geotalea daltonii (strain DSM 22248 / JCM 15807 / FRC-32) (Geobacter daltonii), this protein is Small ribosomal subunit protein uS4.